A 331-amino-acid chain; its full sequence is Ornithine carbamoyltransferase (331 aa).

Carbamoyl phosphate contacts are provided by residues 55–58, Gln82, Arg106, and 133–136; these read STRT and HPTQ. Residues Asn166, Asp230, and 234-235 contribute to the L-ornithine site; that span reads SM. Residues 272 to 273 and Arg317 contribute to the carbamoyl phosphate site; that span reads CL.

Belongs to the aspartate/ornithine carbamoyltransferase superfamily. OTCase family.

The protein localises to the cytoplasm. The enzyme catalyses carbamoyl phosphate + L-ornithine = L-citrulline + phosphate + H(+). Its pathway is amino-acid biosynthesis; L-arginine biosynthesis; L-arginine from L-ornithine and carbamoyl phosphate: step 1/3. Reversibly catalyzes the transfer of the carbamoyl group from carbamoyl phosphate (CP) to the N(epsilon) atom of ornithine (ORN) to produce L-citrulline. The polypeptide is Ornithine carbamoyltransferase (Neisseria meningitidis serogroup C / serotype 2a (strain ATCC 700532 / DSM 15464 / FAM18)).